The following is a 1529-amino-acid chain: Ras guanine nucleotide exchange factor B (1529 aa).

Positions 135–186 (ISNIEKQLSNLVNLKSNTTEQTDRKYKTNLIDFKESIIQLEKDCKNLLKQSN) form a coiled coil. Disordered stretches follow at residues 290–357 (INTL…ISIN), 576–600 (TTTTTTTTTTTNTTTNPSNTIKSSH), 680–724 (KRNT…HIQQ), 847–948 (MGKE…NHNR), and 1168–1206 (QPPQITTQSTQPIQNSTTQPQPQPQPQQPQPQLQQSTNL). Composition is skewed to low complexity over residues 576 to 591 (TTTTTTTTTTTNTTTN), 683 to 724 (TSSG…HIQQ), and 853 to 887 (NSNTNNANNPNNNNNNNNNNNNNNNNNNNNNNNNE). 2 coiled-coil regions span residues 722–798 (IQQI…LNRK) and 871–898 (NNNNNNNNNNNNNNNNENKNENKNETNK). The span at 888 to 898 (NKNENKNETNK) shows a compositional bias: basic and acidic residues. Low complexity-rich tracts occupy residues 906 to 916 (SSTSTLSSSTT), 924 to 940 (SSTNSPNSSTPNLLLPP), 1168 to 1187 (QPPQITTQSTQPIQNSTTQP), and 1197 to 1206 (QPQLQQSTNL). Positions 1075 to 1205 (FYRSIKYASL…PQPQLQQSTN (131 aa)) constitute an N-terminal Ras-GEF domain. One can recognise a Ras-GEF domain in the interval 1282 to 1517 (SSTDIAEQLT…YEQSILLEPK (236 aa)).

It localises to the cytoplasm. Promotes the exchange of Ras-bound GDP by GTP. Involved in phagocytosis, fluid-phase endocytosis, regulation of macropinocytosis and control of cell movement. In Dictyostelium discoideum (Social amoeba), this protein is Ras guanine nucleotide exchange factor B (gefB).